The chain runs to 891 residues: Valine--tRNA ligase (891 aa).

The 'HIGH' region signature appears at Pro43–His53. The 'KMSKS' region signature appears at Lys536–Ser540. Lys539 provides a ligand contact to ATP.

The protein belongs to the class-I aminoacyl-tRNA synthetase family. ValS type 2 subfamily.

It localises to the cytoplasm. It catalyses the reaction tRNA(Val) + L-valine + ATP = L-valyl-tRNA(Val) + AMP + diphosphate. In terms of biological role, catalyzes the attachment of valine to tRNA(Val). As ValRS can inadvertently accommodate and process structurally similar amino acids such as threonine, to avoid such errors, it has a 'posttransfer' editing activity that hydrolyzes mischarged Thr-tRNA(Val) in a tRNA-dependent manner. The polypeptide is Valine--tRNA ligase (Pyrococcus furiosus (strain ATCC 43587 / DSM 3638 / JCM 8422 / Vc1)).